The following is a 118-amino-acid chain: Large ribosomal subunit protein uL22 (118 aa).

The protein belongs to the universal ribosomal protein uL22 family. As to quaternary structure, part of the 50S ribosomal subunit.

Its function is as follows. This protein binds specifically to 23S rRNA; its binding is stimulated by other ribosomal proteins, e.g. L4, L17, and L20. It is important during the early stages of 50S assembly. It makes multiple contacts with different domains of the 23S rRNA in the assembled 50S subunit and ribosome. Functionally, the globular domain of the protein is located near the polypeptide exit tunnel on the outside of the subunit, while an extended beta-hairpin is found that lines the wall of the exit tunnel in the center of the 70S ribosome. The chain is Large ribosomal subunit protein uL22 from Listeria innocua serovar 6a (strain ATCC BAA-680 / CLIP 11262).